Consider the following 401-residue polypeptide: MKYDRILIRYGEMTTKGKNRNIFVRRLKNNIARKLQAFPRIKIEYMRDRMYILLNGEPHEPIIDKLKTVFGIHSFSLAMKCENDLAAIKETALAAVRQLPYKGKTFKVSARRVDKQFPYRSDELNHEVGAHILRQTEDLTVNVRQPDIDVRIEVRQDGTYVTCHDIFGAGGLPVGTSGKAMLMLSGGIDSPVAGYLAMKRGLEIEAVHFFSPPFTSERAKQKVIDLVRKLTAYGGKIKLHIVPFTEVQQAIYQGVPNEYSLISTRRAMLKITDALRRRQRGLAIVTGESLGQVASQTLESMYVINEVTNTPVLRPLISMDKMEIIEIAKQIDTHDISILPYEDCCTIFTPRAPKTKPKKEKVLQHESQLDLAPLLEKAINETETIVIDEEAGQADEFTALF.

The THUMP domain maps to 60 to 165 (EPIIDKLKTV…QDGTYVTCHD (106 aa)). ATP is bound by residues 183–184 (ML), 208–209 (HF), R265, G287, and Q296.

It belongs to the ThiI family.

It localises to the cytoplasm. The catalysed reaction is [ThiI sulfur-carrier protein]-S-sulfanyl-L-cysteine + a uridine in tRNA + 2 reduced [2Fe-2S]-[ferredoxin] + ATP + H(+) = [ThiI sulfur-carrier protein]-L-cysteine + a 4-thiouridine in tRNA + 2 oxidized [2Fe-2S]-[ferredoxin] + AMP + diphosphate. The enzyme catalyses [ThiS sulfur-carrier protein]-C-terminal Gly-Gly-AMP + S-sulfanyl-L-cysteinyl-[cysteine desulfurase] + AH2 = [ThiS sulfur-carrier protein]-C-terminal-Gly-aminoethanethioate + L-cysteinyl-[cysteine desulfurase] + A + AMP + 2 H(+). It functions in the pathway cofactor biosynthesis; thiamine diphosphate biosynthesis. Catalyzes the ATP-dependent transfer of a sulfur to tRNA to produce 4-thiouridine in position 8 of tRNAs, which functions as a near-UV photosensor. Also catalyzes the transfer of sulfur to the sulfur carrier protein ThiS, forming ThiS-thiocarboxylate. This is a step in the synthesis of thiazole, in the thiamine biosynthesis pathway. The sulfur is donated as persulfide by IscS. The sequence is that of Probable tRNA sulfurtransferase from Geobacillus thermodenitrificans (strain NG80-2).